A 371-amino-acid polypeptide reads, in one-letter code: Mitogen-activated protein kinase homolog MMK2 (371 aa).

In terms of domain architecture, Protein kinase spans 37–323 (VPPIRSVGRG…VDEALCHPYM (287 aa)). ATP-binding positions include 43-51 (VGRGAYGIV) and lysine 66. Aspartate 163 acts as the Proton acceptor in catalysis. Threonine 195 carries the post-translational modification Phosphothreonine. The TXY motif lies at 195–197 (TEY). Tyrosine 197 is modified (phosphotyrosine).

This sequence belongs to the protein kinase superfamily. CMGC Ser/Thr protein kinase family. MAP kinase subfamily. The cofactor is Mg(2+). In terms of processing, dually phosphorylated on Thr-195 and Tyr-197, which activates the enzyme. Autophosphorylated.

The catalysed reaction is L-seryl-[protein] + ATP = O-phospho-L-seryl-[protein] + ADP + H(+). The enzyme catalyses L-threonyl-[protein] + ATP = O-phospho-L-threonyl-[protein] + ADP + H(+). With respect to regulation, activated by tyrosine and threonine phosphorylation. In Medicago sativa (Alfalfa), this protein is Mitogen-activated protein kinase homolog MMK2 (MMK2).